A 178-amino-acid chain; its full sequence is HTH-type transcriptional regulator SutR (178 aa).

In terms of domain architecture, HTH cro/C1-type spans 12 to 66 (LKQLRQQRGWSLSRLAEATGVSKAMLGQIERNESSPTVATLWKIATGLNVPFSTF). Positions 23 to 42 (LSRLAEATGVSKAMLGQIER) form a DNA-binding region, H-T-H motif. Residues 105-171 (QMASGAISES…GGEQTVHFHS (67 aa)) form the Cupin type-2 domain.

Its function is as follows. Regulates the expression of 12-16 transcription units involved in various steps of sulfur utilization. Represses expression of pfkB, fliZ, cysE, ydcO and its own expression. Activates expression of ypfN. Acts by binding to SutR boxes. The protein is HTH-type transcriptional regulator SutR of Escherichia coli (strain K12).